A 394-amino-acid chain; its full sequence is Elongation factor Tu 1 (394 aa).

Positions K10–E204 constitute a tr-type G domain. The interval G19–T26 is G1. G19–T26 lines the GTP pocket. T26 contacts Mg(2+). Residues G60–S64 are G2. Positions D81–G84 are G3. Residues D81–H85 and N136–D139 each bind GTP. The tract at residues N136–D139 is G4. The G5 stretch occupies residues S174 to L176.

This sequence belongs to the TRAFAC class translation factor GTPase superfamily. Classic translation factor GTPase family. EF-Tu/EF-1A subfamily. In terms of assembly, monomer.

The protein localises to the cytoplasm. The catalysed reaction is GTP + H2O = GDP + phosphate + H(+). Its function is as follows. GTP hydrolase that promotes the GTP-dependent binding of aminoacyl-tRNA to the A-site of ribosomes during protein biosynthesis. The sequence is that of Elongation factor Tu 1 from Vibrio vulnificus (strain YJ016).